The primary structure comprises 288 residues: Thymidylate synthase (288 aa).

DUMP contacts are provided by residues Arg-21 and 150–151; that span reads RR. The active-site Nucleophile is the Cys-170. Residues 191 to 194, Asn-202, and 232 to 234 each bind dUMP; these read RSGD and HIY. (6R)-5,10-methylene-5,6,7,8-tetrahydrofolate is bound at residue Asp-194. A (6R)-5,10-methylene-5,6,7,8-tetrahydrofolate-binding site is contributed by Ala-287.

The protein belongs to the thymidylate synthase family. Bacterial-type ThyA subfamily. As to quaternary structure, homodimer.

The protein resides in the cytoplasm. It carries out the reaction dUMP + (6R)-5,10-methylene-5,6,7,8-tetrahydrofolate = 7,8-dihydrofolate + dTMP. It functions in the pathway pyrimidine metabolism; dTTP biosynthesis. In terms of biological role, catalyzes the reductive methylation of 2'-deoxyuridine-5'-monophosphate (dUMP) to 2'-deoxythymidine-5'-monophosphate (dTMP) while utilizing 5,10-methylenetetrahydrofolate (mTHF) as the methyl donor and reductant in the reaction, yielding dihydrofolate (DHF) as a by-product. This enzymatic reaction provides an intracellular de novo source of dTMP, an essential precursor for DNA biosynthesis. The polypeptide is Thymidylate synthase (Mesoplasma florum (strain ATCC 33453 / NBRC 100688 / NCTC 11704 / L1) (Acholeplasma florum)).